A 125-amino-acid chain; its full sequence is UPF0251 protein DSY3441 (125 aa).

It belongs to the UPF0251 family.

The protein is UPF0251 protein DSY3441 of Desulfitobacterium hafniense (strain Y51).